An 801-amino-acid chain; its full sequence is Phenylalanine--tRNA ligase beta subunit (801 aa).

The region spanning 39–147 (GGGLDQVVVA…SDLPLGVPLF (109 aa)) is the tRNA-binding domain. Residues 401–477 (VSHRTIRFRV…RLNGYDRIET (77 aa)) form the B5 domain. Mg(2+) contacts are provided by D455, D461, E464, and E465. An FDX-ACB domain is found at 708–801 (SRFPDTFRDI…LVAKLGATIR (94 aa)).

It belongs to the phenylalanyl-tRNA synthetase beta subunit family. Type 1 subfamily. Tetramer of two alpha and two beta subunits. The cofactor is Mg(2+).

The protein localises to the cytoplasm. It catalyses the reaction tRNA(Phe) + L-phenylalanine + ATP = L-phenylalanyl-tRNA(Phe) + AMP + diphosphate + H(+). This chain is Phenylalanine--tRNA ligase beta subunit, found in Geobacter sulfurreducens (strain ATCC 51573 / DSM 12127 / PCA).